The following is a 253-amino-acid chain: tRNA-cytidine(32) 2-sulfurtransferase 2 (253 aa).

The PP-loop motif motif lies at 33 to 38 (SGGKDS). The [4Fe-4S] cluster site is built by cysteine 108, cysteine 111, and cysteine 199.

The protein belongs to the TtcA family. Homodimer. Requires Mg(2+) as cofactor. It depends on [4Fe-4S] cluster as a cofactor.

Its subcellular location is the cytoplasm. The catalysed reaction is cytidine(32) in tRNA + S-sulfanyl-L-cysteinyl-[cysteine desulfurase] + AH2 + ATP = 2-thiocytidine(32) in tRNA + L-cysteinyl-[cysteine desulfurase] + A + AMP + diphosphate + H(+). Its pathway is tRNA modification. Catalyzes the ATP-dependent 2-thiolation of cytidine in position 32 of tRNA, to form 2-thiocytidine (s(2)C32). The sulfur atoms are provided by the cysteine/cysteine desulfurase (IscS) system. The chain is tRNA-cytidine(32) 2-sulfurtransferase 2 from Francisella tularensis subsp. novicida (strain U112).